A 598-amino-acid polypeptide reads, in one-letter code: Transcriptional repressor tup12 (598 aa).

The tract at residues 118-177 is disordered; that stretch reads IASGVVPQSSKTKHGRNSVSFGKYGNAGPFNSDNSSKPLILNNGSSGGTPKNLRSPAIDS. 7 WD repeats span residues 285–325, 332–371, 374–413, 415–454, 456–495, 510–549, and 552–585; these read EPPI…AMVF, LITLLQEESSKREGDLYVRSVAFSPDGKYLATGVEDQQIR, DIAQKRVYRLLTGHEQEIYSLDFSKDGKTLVSGSGDRTVC, WDVEAGEQKLILHTDDGVTTVMFSPDGQFIAAGSLDKVIR, WTSSGTLVEQLHGHEESVYSVAFSPDGKYLVSGSLDNTIK, YKEGGICKQTFTGHKDFILSVTVSPDGKWIISGSKDRTIQ, and SPDSPHSQLTLQGHNNSVISVAVSPNGHCFATGS.

This sequence belongs to the WD repeat TUP1 family.

Functionally, transcriptional repressor. This is Transcriptional repressor tup12 (tup12) from Schizosaccharomyces pombe (strain 972 / ATCC 24843) (Fission yeast).